A 613-amino-acid polypeptide reads, in one-letter code: Transcription factor MTB1 (613 aa).

Residues 48–130 are JAZ-interaction domain; sequence LQNKLSDLVE…RVLQKLHMLF (83 aa). Disordered stretches follow at residues 256–285 and 391–441; these read EKNEGNNPRLSNSGAVTERTDGNPKIFGHD and AHNV…AERQ. Polar residues predominate over residues 260–270; the sequence is GNNPRLSNSGA. 2 stretches are compositionally biased toward basic and acidic residues: residues 394 to 417 and 427 to 441; these read VESEHSDVEASCKEDRAGPVDEKR and NGREEPLNHVEAERQ. The interval 430–443 is basic motif; degenerate; it reads EEPLNHVEAERQRR. Residues 430-479 enclose the bHLH domain; it reads EEPLNHVEAERQRREKLNQRFYALRAVVPNISKMDKASLLGDAIAYITEL. A helix-loop-helix motif region spans residues 444 to 479; sequence EKLNQRFYALRAVVPNISKMDKASLLGDAIAYITEL. The tract at residues 490–513 is disordered; the sequence is RELRLGSTSRDAITSEDSPSSEIQ. Positions 495 to 512 are enriched in polar residues; that stretch reads GSTSRDAITSEDSPSSEI.

As to quaternary structure, interacts with MYC2 (via N-terminus). MTB1 competes with MED25 for binding to MYC2. Interacts (via N-terminus) with JAZ7.

Its subcellular location is the nucleus. Functionally, transcription factor that negatively regulates jasmonate (JA) signaling. Negatively regulates JA-dependent response to wounding, JA-induced expression of defense genes, JA-dependent responses against herbivorous insects, and JA-dependent resistance against Botrytis cinerea infection. Plays a positive role in resistance against the bacterial pathogen Pseudomonas syringae pv tomato DC3000. This is Transcription factor MTB1 from Solanum lycopersicum (Tomato).